Consider the following 305-residue polypeptide: Phosphopantetheine adenylyltransferase (305 aa).

This sequence belongs to the eukaryotic CoaD family.

Its subcellular location is the cytoplasm. It localises to the nucleus. The catalysed reaction is (R)-4'-phosphopantetheine + ATP + H(+) = 3'-dephospho-CoA + diphosphate. In terms of biological role, reversibly transfers an adenylyl group from ATP to 4'-phosphopantetheine, yielding dephospho-CoA (dPCoA) and pyrophosphate. Plays a role in the physiological regulation of the intracellular CoA concentration. The sequence is that of Phosphopantetheine adenylyltransferase (CAB4) from Saccharomyces cerevisiae (strain ATCC 204508 / S288c) (Baker's yeast).